Consider the following 272-residue polypeptide: Cell division protein FtsQ (272 aa).

Residues 1 to 20 (MSSYAPREIPLDIRLMQGTS) are Cytoplasmic-facing. A helical transmembrane segment spans residues 21–40 (RALFWLVALGCLFVAGHWLM). Residues 41 to 272 (QRNWWDIRAV…KTPQPAGRKD (232 aa)) lie on the Periplasmic side of the membrane. The 70-residue stretch at 45–114 (WDIRAVRLQG…MQLAVTLQAQ (70 aa)) folds into the POTRA domain.

This sequence belongs to the FtsQ/DivIB family. FtsQ subfamily. As to quaternary structure, part of a complex composed of FtsB, FtsL and FtsQ.

It localises to the cell inner membrane. Its function is as follows. Essential cell division protein. May link together the upstream cell division proteins, which are predominantly cytoplasmic, with the downstream cell division proteins, which are predominantly periplasmic. May control correct divisome assembly. In Thiomonas arsenitoxydans (strain DSM 22701 / CIP 110005 / 3As), this protein is Cell division protein FtsQ.